The chain runs to 126 residues: Large ribosomal subunit protein bL20 (126 aa).

Belongs to the bacterial ribosomal protein bL20 family.

Functionally, binds directly to 23S ribosomal RNA and is necessary for the in vitro assembly process of the 50S ribosomal subunit. It is not involved in the protein synthesizing functions of that subunit. This Frankia casuarinae (strain DSM 45818 / CECT 9043 / HFP020203 / CcI3) protein is Large ribosomal subunit protein bL20.